The primary structure comprises 326 residues: Lipopolysaccharide heptosyltransferase 1 (326 aa).

ADP contacts are provided by Thr187, Thr188, Lys192, Glu222, and Met242. ADP-L-glycero-beta-D-manno-heptose is bound by residues Thr187, Thr188, Lys192, Glu222, Met242, Asp261, Thr262, Gly263, and His266. ADP-binding residues include Thr262 and Gly263.

The protein belongs to the glycosyltransferase 9 family. As to quaternary structure, monomer.

It localises to the cell inner membrane. The enzyme catalyses an alpha-Kdo-(2-&gt;4)-alpha-Kdo-(2-&gt;6)-lipid A + ADP-L-glycero-beta-D-manno-heptose = an L-alpha-D-Hep-(1-&gt;5)-[alpha-Kdo-(2-&gt;4)]-alpha-Kdo-(2-&gt;6)-lipid A + ADP + H(+). The catalysed reaction is alpha-Kdo-(2-&gt;4)-alpha-Kdo-(2-&gt;6)-lipid A (E. coli) + ADP-L-glycero-beta-D-manno-heptose = L-alpha-D-Hep-(1-&gt;5)-[alpha-Kdo-(2-&gt;4)]-alpha-Kdo-(2-&gt;6)-lipid A (E. coli) + ADP + H(+). Its pathway is bacterial outer membrane biogenesis; LPS core biosynthesis. With respect to regulation, inhibited by ADP-L-glycero-beta-D-gluco-2-deoxy-2-fluoro-heptose (ADP-2F-heptose), a non-cleavable analog of the substrate ADP-L-glycero-beta-D-manno-heptose. Its function is as follows. Glycosyltransferase involved in the biosynthesis of the core oligosaccharide region of lipopolysaccharide (LPS). Catalyzes the addition of the first heptose unit to one 3-deoxy-D-manno-octulosonic acid (Kdo) residue of the Kdo2-lipid A module. The polypeptide is Lipopolysaccharide heptosyltransferase 1 (Escherichia coli O18:K1:H7 (strain RS218 / NMEC)).